Consider the following 555-residue polypeptide: Urocanate hydratase (555 aa).

NAD(+)-binding positions include 51 to 52 (GG), Gln129, 175 to 177 (GMG), Glu195, 262 to 266 (QTSAH), 272 to 273 (YL), and Tyr321. Cys409 is a catalytic residue. An NAD(+)-binding site is contributed by Gly491.

It belongs to the urocanase family. NAD(+) serves as cofactor.

The protein resides in the cytoplasm. The enzyme catalyses 4-imidazolone-5-propanoate = trans-urocanate + H2O. It functions in the pathway amino-acid degradation; L-histidine degradation into L-glutamate; N-formimidoyl-L-glutamate from L-histidine: step 2/3. In terms of biological role, catalyzes the conversion of urocanate to 4-imidazolone-5-propionate. This chain is Urocanate hydratase, found in Stenotrophomonas maltophilia (strain R551-3).